A 121-amino-acid chain; its full sequence is MWLPVLGLVLGIAIGLMTNLTIPSEYSNYLSLAVLAALDTLIGGIRAHLQGTYDEMVFVSGFFFNIILAISLAFLGVHLGVDLYLAGIFAFGVRLFQNIAVIRRNLLTKWTLSKKNKKNVI.

3 consecutive transmembrane segments (helical) span residues 2-22 (WLPV…NLTI), 29-49 (YLSL…RAHL), and 57-77 (VFVS…FLGV).

It belongs to the sbp family.

It is found in the cell membrane. This chain is Small basic protein (sbp), found in Bacillus subtilis (strain 168).